Here is a 439-residue protein sequence, read N- to C-terminus: GTPase Der (439 aa).

EngA-type G domains follow at residues 4-168 (PIVA…KDDE) and 177-352 (INIA…DNYT). GTP-binding positions include 10–17 (GRPNVGKS), 57–61 (DTGGI), 120–123 (NKID), 183–190 (GKPNVGKS), 230–234 (DTAGL), and 295–298 (NKWD). The KH-like domain maps to 353–437 (KRVKTGVLND…GIKLEFRERK (85 aa)).

It belongs to the TRAFAC class TrmE-Era-EngA-EngB-Septin-like GTPase superfamily. EngA (Der) GTPase family. As to quaternary structure, associates with the 50S ribosomal subunit.

GTPase that plays an essential role in the late steps of ribosome biogenesis. This chain is GTPase Der, found in Clostridium botulinum (strain Langeland / NCTC 10281 / Type F).